A 288-amino-acid chain; its full sequence is Pantothenate synthetase (288 aa).

30–37 (MGFLHEGH) contacts ATP. His-37 functions as the Proton donor in the catalytic mechanism. Position 61 (Gln-61) interacts with (R)-pantoate. Position 61 (Gln-61) interacts with beta-alanine. 147–150 (GMKD) serves as a coordination point for ATP. Gln-153 contributes to the (R)-pantoate binding site. 184–187 (KSSR) contributes to the ATP binding site.

It belongs to the pantothenate synthetase family. As to quaternary structure, homodimer.

It localises to the cytoplasm. It carries out the reaction (R)-pantoate + beta-alanine + ATP = (R)-pantothenate + AMP + diphosphate + H(+). Its pathway is cofactor biosynthesis; (R)-pantothenate biosynthesis; (R)-pantothenate from (R)-pantoate and beta-alanine: step 1/1. In terms of biological role, catalyzes the condensation of pantoate with beta-alanine in an ATP-dependent reaction via a pantoyl-adenylate intermediate. This Bacillus licheniformis (strain ATCC 14580 / DSM 13 / JCM 2505 / CCUG 7422 / NBRC 12200 / NCIMB 9375 / NCTC 10341 / NRRL NRS-1264 / Gibson 46) protein is Pantothenate synthetase.